A 377-amino-acid chain; its full sequence is Erythronate-4-phosphate dehydrogenase (377 aa).

Residues S59 and T81 each contribute to the substrate site. D162 lines the NAD(+) pocket. R237 is a catalytic residue. NAD(+) is bound at residue D260. E265 is an active-site residue. H282 acts as the Proton donor in catalysis. G285 provides a ligand contact to NAD(+). Y286 is a binding site for substrate.

It belongs to the D-isomer specific 2-hydroxyacid dehydrogenase family. PdxB subfamily. Homodimer.

The protein resides in the cytoplasm. It catalyses the reaction 4-phospho-D-erythronate + NAD(+) = (R)-3-hydroxy-2-oxo-4-phosphooxybutanoate + NADH + H(+). It functions in the pathway cofactor biosynthesis; pyridoxine 5'-phosphate biosynthesis; pyridoxine 5'-phosphate from D-erythrose 4-phosphate: step 2/5. Catalyzes the oxidation of erythronate-4-phosphate to 3-hydroxy-2-oxo-4-phosphonooxybutanoate. The protein is Erythronate-4-phosphate dehydrogenase of Psychrobacter arcticus (strain DSM 17307 / VKM B-2377 / 273-4).